Consider the following 272-residue polypeptide: Lyso-glycine lipid O-acyltransferase (272 aa).

This sequence belongs to the O-acyltransferase GlsA family.

It carries out the reaction a lyso-glycine lipid + a fatty acyl-[ACP] = a glycine lipid + holo-[ACP]. The enzyme catalyses N-[(3R)-3-hydroxyhexadecanoyl]-glycine + hexadecanoyl-[ACP] = N-[(3R)-3-(hexadecanoyloxy)hexadecanoyl]-glycine + holo-[ACP]. It functions in the pathway lipid metabolism. Its function is as follows. Is involved in the production of glycine lipids (GL), which are phosphorus-free membrane lipids important for fitness during growth of the human gut bacterium B.thetaiotaomicron in vivo and in vitro. Catalyzes the second step of GL biosynthesis, i.e. the O-acylation of the hydroxyl group of lyso-glycine lipids, resulting in the production of the mature diacylated glycine lipids. This is Lyso-glycine lipid O-acyltransferase from Bacteroides thetaiotaomicron (strain ATCC 29148 / DSM 2079 / JCM 5827 / CCUG 10774 / NCTC 10582 / VPI-5482 / E50).